The chain runs to 158 residues: Transcriptional repressor NrdR (158 aa).

The segment at 3–34 is a zinc-finger region; it reads CPYCQSEDTQVKDSRPAEDGAVIRRRRVCSVC. The 91-residue stretch at 49–139 folds into the ATP-cone domain; it reads LMVVKKSGRR…VYRNFSKAVD (91 aa).

The protein belongs to the NrdR family. It depends on Zn(2+) as a cofactor.

In terms of biological role, negatively regulates transcription of bacterial ribonucleotide reductase nrd genes and operons by binding to NrdR-boxes. The polypeptide is Transcriptional repressor NrdR (Brucella abortus (strain S19)).